A 186-amino-acid polypeptide reads, in one-letter code: Ribonuclease HII (186 aa).

Residues 2 to 186 (KILAGVDEVG…KTFSPISDLL (185 aa)) form the RNase H type-2 domain. A divalent metal cation is bound by residues D8, E9, and D99.

The protein belongs to the RNase HII family. Requires Mn(2+) as cofactor. The cofactor is Mg(2+).

The protein resides in the cytoplasm. It carries out the reaction Endonucleolytic cleavage to 5'-phosphomonoester.. In terms of biological role, endonuclease that specifically degrades the RNA of RNA-DNA hybrids. This Pelagibacter ubique (strain HTCC1062) protein is Ribonuclease HII.